Here is a 1097-residue protein sequence, read N- to C-terminus: U3 small nucleolar RNA-associated protein 22 (1097 aa).

Composition is skewed to basic and acidic residues over residues 1 to 10 (MNGLKREHES) and 18 to 27 (KTPETEYDSH). The interval 1–27 (MNGLKREHESSSSQDGSKTPETEYDSH) is disordered.

Belongs to the NRAP family. Component of the ribosomal small subunit (SSU) processome.

The protein resides in the nucleus. It is found in the nucleolus. Involved in nucleolar processing of pre-18S ribosomal RNA and ribosome assembly. This Schizosaccharomyces pombe (strain 972 / ATCC 24843) (Fission yeast) protein is U3 small nucleolar RNA-associated protein 22.